The chain runs to 301 residues: MNWITNYVRPKINSMLGRREMPENLWIKDPSTGEMVFHKDLESNQFVIPSSGHHMRIKAKDRLRFFFDNGEYTTLEAPKVPLDPLKFRDEKKYIDRLKDYRSRTGMDDAIVNGLGTIEGLPIVATVQDFSFMGGSLGMGAGEAIIQGFEKAIELKRPFVLFASSGGARMQEGILSLMQLPRTTVAVEMLKEAGLPYIVVLTNPTTGGVTASYAMLGDIHIAEPGALIGFAGPRVIEQTIREKLPEGFQSSEYLMEHGMVDMVVSRLELKATIARLLKIMTKQPANSDAPAPQKPDADSKAA.

Residues leucine 25–proline 294 form the CoA carboxyltransferase N-terminal domain.

Belongs to the AccD/PCCB family. In terms of assembly, acetyl-CoA carboxylase is a heterohexamer composed of biotin carboxyl carrier protein (AccB), biotin carboxylase (AccC) and two subunits each of ACCase subunit alpha (AccA) and ACCase subunit beta (AccD).

It localises to the cytoplasm. It catalyses the reaction N(6)-carboxybiotinyl-L-lysyl-[protein] + acetyl-CoA = N(6)-biotinyl-L-lysyl-[protein] + malonyl-CoA. It functions in the pathway lipid metabolism; malonyl-CoA biosynthesis; malonyl-CoA from acetyl-CoA: step 1/1. Its function is as follows. Component of the acetyl coenzyme A carboxylase (ACC) complex. Biotin carboxylase (BC) catalyzes the carboxylation of biotin on its carrier protein (BCCP) and then the CO(2) group is transferred by the transcarboxylase to acetyl-CoA to form malonyl-CoA. This Brucella abortus (strain 2308) protein is Acetyl-coenzyme A carboxylase carboxyl transferase subunit beta.